Here is a 254-residue protein sequence, read N- to C-terminus: Coenzyme F420:L-glutamate ligase (254 aa).

Residues 11 to 14 (IPLI), 40 to 41 (ST), and lysine 45 contribute to the GTP site. An a divalent metal cation-binding site is contributed by aspartate 109. GTP is bound at residue asparagine 112. Residues aspartate 150, threonine 151, and glutamate 208 each coordinate a divalent metal cation. A GTP-binding site is contributed by 206-213 (MGEGAGGI).

The protein belongs to the CofE family. In terms of assembly, homodimer. Mg(2+) is required as a cofactor. The cofactor is Mn(2+). Requires K(+) as cofactor.

The enzyme catalyses oxidized coenzyme F420-0 + GTP + L-glutamate = oxidized coenzyme F420-1 + GDP + phosphate + H(+). It catalyses the reaction oxidized coenzyme F420-1 + GTP + L-glutamate = oxidized coenzyme F420-2 + GDP + phosphate + H(+). It participates in cofactor biosynthesis; coenzyme F420 biosynthesis. In terms of biological role, catalyzes the GTP-dependent successive addition of two or more gamma-linked L-glutamates to the L-lactyl phosphodiester of 7,8-didemethyl-8-hydroxy-5-deazariboflavin (F420-0) to form coenzyme F420-0-glutamyl-glutamate (F420-2) or polyglutamated F420 derivatives. This is Coenzyme F420:L-glutamate ligase from Methanosarcina acetivorans (strain ATCC 35395 / DSM 2834 / JCM 12185 / C2A).